Here is a 724-residue protein sequence, read N- to C-terminus: Long-chain-fatty-acid--CoA ligase ACSBG1 (724 aa).

The tract at residues 1 to 51 (MPRNSGAGYGCPHGDPSMLDSRETPQESRQDMTVGTTQEKLKTSSLTDRQP) is disordered. The span at 20–30 (DSRETPQESRQ) shows a compositional bias: basic and acidic residues. A compositionally biased stretch (polar residues) spans 31–51 (DMTVGTTQEKLKTSSLTDRQP). Ser-53 and Ser-56 each carry phosphoserine. Residues 282-290 (TSGTTGNPK), 472-477 (AGYGLS), Asp-550, and Arg-565 contribute to the ATP site. At Tyr-658 the chain carries Phosphotyrosine. Position 701 (Lys-701) interacts with ATP.

It belongs to the ATP-dependent AMP-binding enzyme family. Bubblegum subfamily.

It is found in the cytoplasm. Its subcellular location is the cytoplasmic vesicle. It localises to the microsome. The protein resides in the endoplasmic reticulum. The protein localises to the cell membrane. The catalysed reaction is a long-chain fatty acid + ATP + CoA = a long-chain fatty acyl-CoA + AMP + diphosphate. It carries out the reaction (E)-hexadec-2-enoate + ATP + CoA = (2E)-hexadecenoyl-CoA + AMP + diphosphate. It catalyses the reaction hexadecanoate + ATP + CoA = hexadecanoyl-CoA + AMP + diphosphate. Catalyzes the conversion of fatty acids such as long-chain and very long-chain fatty acids to their active form acyl-CoAs for both synthesis of cellular lipids, and degradation via beta-oxidation. Can activate diverse saturated, monosaturated and polyunsaturated fatty acids. This is Long-chain-fatty-acid--CoA ligase ACSBG1 from Macaca fascicularis (Crab-eating macaque).